A 139-amino-acid polypeptide reads, in one-letter code: MARTKQTARISTGGKAPRKQLAPKAARQSAPATGGVKKPHRFRPGTVALRDIRKYQKSTEILIRKLPFQRLVREIAQDFKTDLRFQSSAVAALQEAAEAYLVGLFEDTNLCAIHAKRVTIMPKEIQLARRIRGERARGE.

Over residues 1-10 (MARTKQTARI) the composition is skewed to polar residues. A disordered region spans residues 1 to 43 (MARTKQTARISTGGKAPRKQLAPKAARQSAPATGGVKKPHRFR). Lysine 5 is subject to N6,N6,N6-trimethyllysine; alternate. Lysine 5 is subject to N6,N6-dimethyllysine; alternate. At lysine 5 the chain carries N6-methyllysine; alternate. Serine 11 is modified (phosphoserine). Phosphothreonine is present on threonine 12. The residue at position 15 (lysine 15) is an N6-acetyllysine. An N6-methyllysine; alternate mark is found at lysine 19 and lysine 24. N6-acetyllysine; alternate occurs at positions 19 and 24. Serine 29 carries the phosphoserine modification. Lysine 37 carries the post-translational modification N6,N6,N6-trimethyllysine; alternate. Lysine 37 carries the post-translational modification N6,N6-dimethyllysine; alternate. Lysine 37 carries the post-translational modification N6-methyllysine; alternate.

This sequence belongs to the histone H3 family. In terms of assembly, the nucleosome is a histone octamer containing two molecules each of H2A, H2B, H3 and H4 assembled in one H3-H4 heterotetramer and two H2A-H2B heterodimers. The octamer wraps approximately 147 bp of DNA.

Its subcellular location is the nucleus. It localises to the chromosome. Functionally, core component of nucleosome. Nucleosomes wrap and compact DNA into chromatin, limiting DNA accessibility to the cellular machineries which require DNA as a template. Histones thereby play a central role in transcription regulation, DNA repair, DNA replication and chromosomal stability. DNA accessibility is regulated via a complex set of post-translational modifications of histones, also called histone code, and nucleosome remodeling. The chain is Histone H3-like 5 from Arabidopsis thaliana (Mouse-ear cress).